The primary structure comprises 60 residues: Large ribosomal subunit protein uL30 (60 aa).

Belongs to the universal ribosomal protein uL30 family. As to quaternary structure, part of the 50S ribosomal subunit.

The polypeptide is Large ribosomal subunit protein uL30 (Verminephrobacter eiseniae (strain EF01-2)).